Consider the following 267-residue polypeptide: Undecaprenyl-diphosphatase (267 aa).

A run of 7 helical transmembrane segments spans residues 1–21, 40–60, 85–105, 111–131, 190–210, 219–239, and 245–265; these read MSLFHLILVALIQGITEFLPV, GQVIDVAVHVGTLGAVVLYFW, LAMGLIVATIPTVLAGAALHF, ALRSITVIGWTMLLFGLLLWW, MLMSIPTIIASGVLLGADVAV, DGAIAAAFAFVSALLALSLMM, and VSFTPYVIYRLALGLVLLGIA.

This sequence belongs to the UppP family.

Its subcellular location is the cell inner membrane. The catalysed reaction is di-trans,octa-cis-undecaprenyl diphosphate + H2O = di-trans,octa-cis-undecaprenyl phosphate + phosphate + H(+). Functionally, catalyzes the dephosphorylation of undecaprenyl diphosphate (UPP). Confers resistance to bacitracin. The sequence is that of Undecaprenyl-diphosphatase from Ruegeria pomeroyi (strain ATCC 700808 / DSM 15171 / DSS-3) (Silicibacter pomeroyi).